Consider the following 231-residue polypeptide: 5'-methylthioadenosine/S-adenosylhomocysteine nucleosidase (231 aa).

E12 acts as the Proton acceptor in catalysis. Residues G78, V153, and 174–175 contribute to the substrate site; that span reads ME. The active-site Proton donor is D198.

This sequence belongs to the PNP/UDP phosphorylase family. MtnN subfamily.

It carries out the reaction S-adenosyl-L-homocysteine + H2O = S-(5-deoxy-D-ribos-5-yl)-L-homocysteine + adenine. It catalyses the reaction S-methyl-5'-thioadenosine + H2O = 5-(methylsulfanyl)-D-ribose + adenine. The enzyme catalyses 5'-deoxyadenosine + H2O = 5-deoxy-D-ribose + adenine. Its pathway is amino-acid biosynthesis; L-methionine biosynthesis via salvage pathway; S-methyl-5-thio-alpha-D-ribose 1-phosphate from S-methyl-5'-thioadenosine (hydrolase route): step 1/2. Its function is as follows. Catalyzes the irreversible cleavage of the glycosidic bond in both 5'-methylthioadenosine (MTA) and S-adenosylhomocysteine (SAH/AdoHcy) to adenine and the corresponding thioribose, 5'-methylthioribose and S-ribosylhomocysteine, respectively. Also cleaves 5'-deoxyadenosine, a toxic by-product of radical S-adenosylmethionine (SAM) enzymes, into 5-deoxyribose and adenine. The protein is 5'-methylthioadenosine/S-adenosylhomocysteine nucleosidase of Vibrio campbellii (strain ATCC BAA-1116).